The primary structure comprises 705 residues: Polyribonucleotide nucleotidyltransferase (705 aa).

Residues D486 and D492 each contribute to the Mg(2+) site. The KH domain maps to 553–612 (PRIHTMKVSQDKIRDIIGKGGATIRQLTEETGTTIEIEDDGTVKIAATSGEQAEDAINRI). The region spanning 622-690 (GTLYTGKVVR…RQGRVRLSIK (69 aa)) is the S1 motif domain.

Belongs to the polyribonucleotide nucleotidyltransferase family. As to quaternary structure, component of the RNA degradosome, which is a multiprotein complex involved in RNA processing and mRNA degradation. Mg(2+) serves as cofactor.

It localises to the cytoplasm. The catalysed reaction is RNA(n+1) + phosphate = RNA(n) + a ribonucleoside 5'-diphosphate. In terms of biological role, involved in mRNA degradation. Catalyzes the phosphorolysis of single-stranded polyribonucleotides processively in the 3'- to 5'-direction. The polypeptide is Polyribonucleotide nucleotidyltransferase (Colwellia psychrerythraea (strain 34H / ATCC BAA-681) (Vibrio psychroerythus)).